Here is a 588-residue protein sequence, read N- to C-terminus: Proline--tRNA ligase (588 aa).

It belongs to the class-II aminoacyl-tRNA synthetase family. ProS type 1 subfamily. As to quaternary structure, homodimer.

The protein localises to the cytoplasm. It carries out the reaction tRNA(Pro) + L-proline + ATP = L-prolyl-tRNA(Pro) + AMP + diphosphate. Functionally, catalyzes the attachment of proline to tRNA(Pro) in a two-step reaction: proline is first activated by ATP to form Pro-AMP and then transferred to the acceptor end of tRNA(Pro). As ProRS can inadvertently accommodate and process non-cognate amino acids such as alanine and cysteine, to avoid such errors it has two additional distinct editing activities against alanine. One activity is designated as 'pretransfer' editing and involves the tRNA(Pro)-independent hydrolysis of activated Ala-AMP. The other activity is designated 'posttransfer' editing and involves deacylation of mischarged Ala-tRNA(Pro). The misacylated Cys-tRNA(Pro) is not edited by ProRS. The chain is Proline--tRNA ligase from Corynebacterium efficiens (strain DSM 44549 / YS-314 / AJ 12310 / JCM 11189 / NBRC 100395).